The sequence spans 273 residues: Large ribosomal subunit protein uL2 (273 aa).

A disordered region spans residues 221–273 (RGTAMNPVDHPHGGGEGRNFGKHPVTPWGIQTKGKKTRSNKRTDKFIVRRRSK).

It belongs to the universal ribosomal protein uL2 family. As to quaternary structure, part of the 50S ribosomal subunit. Forms a bridge to the 30S subunit in the 70S ribosome.

One of the primary rRNA binding proteins. Required for association of the 30S and 50S subunits to form the 70S ribosome, for tRNA binding and peptide bond formation. It has been suggested to have peptidyltransferase activity; this is somewhat controversial. Makes several contacts with the 16S rRNA in the 70S ribosome. The protein is Large ribosomal subunit protein uL2 of Sodalis glossinidius (strain morsitans).